Here is a 241-residue protein sequence, read N- to C-terminus: uncharacterized protein (241 aa).

Residues 78-80 (TSA), Gly111, Ile131, and 138-140 (SSL) contribute to the S-adenosyl-L-methionine site.

Belongs to the class IV-like SAM-binding methyltransferase superfamily. RNA methyltransferase TrmH family.

This is an uncharacterized protein from Haemophilus influenzae (strain ATCC 51907 / DSM 11121 / KW20 / Rd).